A 387-amino-acid polypeptide reads, in one-letter code: BTB and MATH domain-containing protein 38 (387 aa).

The MATH domain maps to 79-204 (EGMLKLEIPN…NEMVTVTARV (126 aa)). A BTB domain is found at 228-295 (CDMTLVINKQ…IYPCHKPITS (68 aa)).

This chain is BTB and MATH domain-containing protein 38 (bath-38), found in Caenorhabditis elegans.